We begin with the raw amino-acid sequence, 136 residues long: Large ribosomal subunit protein uL16 (136 aa).

The protein belongs to the universal ribosomal protein uL16 family. As to quaternary structure, part of the 50S ribosomal subunit.

Its function is as follows. Binds 23S rRNA and is also seen to make contacts with the A and possibly P site tRNAs. The protein is Large ribosomal subunit protein uL16 of Pectobacterium atrosepticum (strain SCRI 1043 / ATCC BAA-672) (Erwinia carotovora subsp. atroseptica).